The primary structure comprises 156 residues: Small ribosomal subunit protein uS7 (156 aa).

It belongs to the universal ribosomal protein uS7 family. In terms of assembly, part of the 30S ribosomal subunit. Contacts proteins S9 and S11.

Functionally, one of the primary rRNA binding proteins, it binds directly to 16S rRNA where it nucleates assembly of the head domain of the 30S subunit. Is located at the subunit interface close to the decoding center, probably blocks exit of the E-site tRNA. This is Small ribosomal subunit protein uS7 from Rhodococcus opacus (strain B4).